Consider the following 883-residue polypeptide: MSSTPKQTTGDALAGHTPMMQQYLRLKAEAGPLLLFYRMGDFYEMFYEDAERAARLLNLTLTKRGNSNGTPIPMAGIPVHAMEQYLARLVALGESVAICEQIGDPAAAKGPVERRIVRIVTPGTLTDEALLPAKADRALAAVCVTGKREPRAGLAWLNLASGAFHVTECAPGQLESELHRIAPAELIQAESAELHMAFEGARTRVPDWHFEADGARAQLLAHFKTDSLGGFDVEDMPAAVCAAGALLRYAARTQSQALAHVQTIAAERPGQYVLLDPVTRRNLELTQTLSGEESPTLFSLLDGCRTPMGSRLLRRWLHHPLRENEPVLARQHAIATMLTVRQEGEQAFAAAGLLETLRDALNAFPDIERIAARVALRSVRPRELASLRDALVALPALHASLAPLSGSPRARELAAQLAMPPDIGELLARAVASEPAVAIRDGGVIAAGFDSELDELRALATDGGDFLVQLEARERERTGIGNLRVEFNRVHGFYIEVSKGQTDKVPEDYRRRQTLKNAERYITPELKTWEDRVLSAQDRSLAREKWLYEQLLDALAQYVRPLSQCASALAELDTLAALAEHARRHDWVAPELIDGAEIDIEAGRHPVVERAIERFTPNGCRLDQTRRMLLITGPNMGGKSTYMRQVALIALLARTGSFVPATRARVGRLDRIFTRIGAADDLAGGRSTFMMEMTEAAAILAASTPASLVLMDEIGRGTSTYDGLALAWAIAYRLLTHNRALTLFATHYFELTRLPAEQPTAANVHLAAAESAGGIVFLHEVREGPASRSYGIQVAQRAGVPAAVIRQASRELERLEAQGAPTPQLGLFAAALDADVQSQAMTEQAEDAAALAQLRDQLAAIDPDSLTPREALDALYRLKQHLT.

633–640 (GPNMGGKS) lines the ATP pocket.

It belongs to the DNA mismatch repair MutS family.

In terms of biological role, this protein is involved in the repair of mismatches in DNA. It is possible that it carries out the mismatch recognition step. This protein has a weak ATPase activity. This is DNA mismatch repair protein MutS from Bordetella parapertussis (strain 12822 / ATCC BAA-587 / NCTC 13253).